An 817-amino-acid polypeptide reads, in one-letter code: Anaphase-promoting complex subunit 4 (817 aa).

Residue tyrosine 469 is modified to Phosphotyrosine. Residues serine 757 and serine 758 each carry the phosphoserine modification. Lysine 772 participates in a covalent cross-link: Glycyl lysine isopeptide (Lys-Gly) (interchain with G-Cter in SUMO2). Phosphoserine is present on residues serine 777 and serine 779. Lysine 798 participates in a covalent cross-link: Glycyl lysine isopeptide (Lys-Gly) (interchain with G-Cter in SUMO2).

It belongs to the APC4 family. As to quaternary structure, the mammalian APC/C is composed at least of 14 distinct subunits ANAPC1, ANAPC2, CDC27/APC3, ANAPC4, ANAPC5, CDC16/APC6, ANAPC7, CDC23/APC8, ANAPC10, ANAPC11, CDC26/APC12, ANAPC13, ANAPC15 and ANAPC16 that assemble into a complex of at least 19 chains with a combined molecular mass of around 1.2 MDa; APC/C interacts with FZR1 and FBXO5. In the context of the APC/C complex, directly interacts with UBE2S.

It localises to the nucleus. It functions in the pathway protein modification; protein ubiquitination. Its function is as follows. Component of the anaphase promoting complex/cyclosome (APC/C), a cell cycle-regulated E3 ubiquitin ligase that controls progression through mitosis and the G1 phase of the cell cycle. The APC/C complex acts by mediating ubiquitination and subsequent degradation of target proteins: it mainly mediates the formation of 'Lys-11'-linked polyubiquitin chains and, to a lower extent, the formation of 'Lys-48'- and 'Lys-63'-linked polyubiquitin chains. The APC/C complex catalyzes assembly of branched 'Lys-11'-/'Lys-48'-linked branched ubiquitin chains on target proteins. This Pongo abelii (Sumatran orangutan) protein is Anaphase-promoting complex subunit 4 (ANAPC4).